The sequence spans 216 residues: NKG2-D type II integral membrane protein (216 aa).

The Cytoplasmic portion of the chain corresponds to 1–51; that stretch reads MGWIRGRRSRHSWEMSEFHNYNLDLKKSDFSTRWQKQRCPVVKSKCRENAS. The chain crosses the membrane as a helical; Signal-anchor for type II membrane protein span at residues 52–72; the sequence is PFFFCCFIAVAMGIRFIIMVT. Topologically, residues 73-216 are extracellular; sequence IWSAVFLNSL…NTYICMQRTV (144 aa). Disulfide bonds link Cys96-Cys105 and Cys99-Cys110. Positions 98 to 213 constitute a C-type lectin domain; it reads PCPKNWICYK…STPNTYICMQ (116 aa). N-linked (GlcNAc...) asparagine glycosylation is found at Asn115, Asn131, Asn163, and Asn202. Disulfide bonds link Cys127–Cys211 and Cys189–Cys203.

Homodimer; disulfide-linked. Heterohexamer composed of two subunits of KLRK1 and four subunits of HCST/DAP10. Interacts (via transmembrane domain) with HCST/DAP10 (via transmembrane domain); the interaction is required for KLRK1 NK cell surface and induces NK cell-mediated cytotoxicity. Can form disulfide-bonded heterodimer with CD94. Interacts with CEACAM1; recruits PTPN6 that dephosphorylates VAV1. As to expression, natural killer cells.

It is found in the cell membrane. Its function is as follows. Functions as an activating and costimulatory receptor involved in immunosurveillance upon binding to various cellular stress-inducible ligands displayed at the surface of autologous tumor cells and virus-infected cells. Provides both stimulatory and costimulatory innate immune responses on activated killer (NK) cells, leading to cytotoxic activity. Acts as a costimulatory receptor for T-cell receptor (TCR) in CD8(+) T-cell-mediated adaptive immune responses by amplifying T-cell activation. Stimulates perforin-mediated elimination of ligand-expressing tumor cells. Signaling involves calcium influx, culminating in the expression of TNF-alpha. Participates in NK cell-mediated bone marrow graft rejection. May play a regulatory role in differentiation and survival of NK cells. Binds to ligands belonging to various subfamilies of MHC class I-related glycoproteins. The polypeptide is NKG2-D type II integral membrane protein (KLRK1) (Pan troglodytes (Chimpanzee)).